The primary structure comprises 190 residues: Lipid A 1-phosphatase (190 aa).

Transmembrane regions (helical) follow at residues 22 to 42, 60 to 80, 117 to 137, 145 to 162, and 164 to 184; these read LLAL…PKVP, FIPT…VGLF, GNFN…AFLM, YFWL…RIYL, and MHTI…VSLF.

This sequence belongs to the lipid A LpxE 1-phosphatase family. The cofactor is Does not require divalent cations..

The protein localises to the cell inner membrane. It functions in the pathway bacterial outer membrane biogenesis; LPS lipid A biosynthesis. Functionally, removes the 1-phosphate group from tetra- and probably hexaacylated lipid A species, has no requirement for the Kdo moiety of lipid A. Has no 4'-phosphatase activity. Has no activity on phospholipids (phosphatidylglycerol, phosphatidylethanolamine or cardiolipin). This enzyme has to act before EptA can attach phosphoethanolamine to the 1-position of lipid A. Absence of the 1-phosphate group renders the bacteria partially resistant to host-derived cationic antimicrobial peptides (CAMP), allowing it to camouflage itself from the host innate immune response, and plays a role in the long-term colonization of the host's stomach. The sequence is that of Lipid A 1-phosphatase from Helicobacter pylori (strain ATCC 700392 / 26695) (Campylobacter pylori).